We begin with the raw amino-acid sequence, 412 residues long: Serine hydroxymethyltransferase (412 aa).

Residues Leu117 and 121–123 (GHL) contribute to the (6S)-5,6,7,8-tetrahydrofolate site. Lys226 is modified (N6-(pyridoxal phosphate)lysine).

Belongs to the SHMT family. Homodimer. Requires pyridoxal 5'-phosphate as cofactor.

It is found in the cytoplasm. It carries out the reaction (6R)-5,10-methylene-5,6,7,8-tetrahydrofolate + glycine + H2O = (6S)-5,6,7,8-tetrahydrofolate + L-serine. Its pathway is one-carbon metabolism; tetrahydrofolate interconversion. The protein operates within amino-acid biosynthesis; glycine biosynthesis; glycine from L-serine: step 1/1. Catalyzes the reversible interconversion of serine and glycine with tetrahydrofolate (THF) serving as the one-carbon carrier. This reaction serves as the major source of one-carbon groups required for the biosynthesis of purines, thymidylate, methionine, and other important biomolecules. Also exhibits THF-independent aldolase activity toward beta-hydroxyamino acids, producing glycine and aldehydes, via a retro-aldol mechanism. This is Serine hydroxymethyltransferase from Symbiobacterium thermophilum (strain DSM 24528 / JCM 14929 / IAM 14863 / T).